The following is a 172-amino-acid chain: EPIDERMAL PATTERNING FACTOR-like protein 7 (172 aa).

Positions 1–27 (MDHVNPTLFHLKSLSIFTLTLLYISSP) are cleaved as a signal peptide. 4 cysteine pairs are disulfide-bonded: Cys128/Cys159, Cys132/Cys138, Cys135/Cys161, and Cys147/Cys153.

The protein belongs to the plant cysteine rich small secretory peptide family. Epidermal patterning factor subfamily.

The protein localises to the secreted. In terms of biological role, controls stomatal patterning. In Arabidopsis thaliana (Mouse-ear cress), this protein is EPIDERMAL PATTERNING FACTOR-like protein 7.